A 329-amino-acid polypeptide reads, in one-letter code: Pantothenate kinase (329 aa).

The interval 1–22 (MPAQGPSHGELPPADAGRESSP) is disordered. 107–114 (GSVAVGKS) is an ATP binding site.

Belongs to the prokaryotic pantothenate kinase family.

Its subcellular location is the cytoplasm. It carries out the reaction (R)-pantothenate + ATP = (R)-4'-phosphopantothenate + ADP + H(+). It functions in the pathway cofactor biosynthesis; coenzyme A biosynthesis; CoA from (R)-pantothenate: step 1/5. This Nocardioides sp. (strain ATCC BAA-499 / JS614) protein is Pantothenate kinase.